Here is an 85-residue protein sequence, read N- to C-terminus: Putative transmembrane protein ORF85 (85 aa).

Transmembrane regions (helical) follow at residues 12-32 and 44-64; these read FPPT…KFLS and LGII…GAGI.

Its subcellular location is the host membrane. This chain is Putative transmembrane protein ORF85, found in Acidianus convivator (ABV).